A 110-amino-acid polypeptide reads, in one-letter code: uncharacterized protein (110 aa).

It to M.jannaschii MJ0123 and A.aeolicus AA15.

This is an uncharacterized protein from Methanocaldococcus jannaschii (strain ATCC 43067 / DSM 2661 / JAL-1 / JCM 10045 / NBRC 100440) (Methanococcus jannaschii).